Reading from the N-terminus, the 491-residue chain is Trigger factor (491 aa).

The PPIase FKBP-type domain occupies 169–254 (GDRVTIDYLG…VKDVAAAAPI (86 aa)). The tract at residues 433–491 (KTVSKDELMAEDEAEDKPAKKAPAKKKAAAKAEAGEGEEAAAPKKKAPAKKKAADDSAE) is disordered. Residues 452 to 461 (KKAPAKKKAA) are compositionally biased toward basic residues.

The protein belongs to the FKBP-type PPIase family. Tig subfamily.

It is found in the cytoplasm. The catalysed reaction is [protein]-peptidylproline (omega=180) = [protein]-peptidylproline (omega=0). Its function is as follows. Involved in protein export. Acts as a chaperone by maintaining the newly synthesized protein in an open conformation. Functions as a peptidyl-prolyl cis-trans isomerase. The protein is Trigger factor of Sinorhizobium fredii (strain NBRC 101917 / NGR234).